A 97-amino-acid chain; its full sequence is Small ribosomal subunit protein bS20 (97 aa).

Belongs to the bacterial ribosomal protein bS20 family.

Binds directly to 16S ribosomal RNA. The sequence is that of Small ribosomal subunit protein bS20 from Synechocystis sp. (strain ATCC 27184 / PCC 6803 / Kazusa).